The chain runs to 440 residues: Thymidine phosphorylase (440 aa).

This sequence belongs to the thymidine/pyrimidine-nucleoside phosphorylase family. Homodimer.

The enzyme catalyses thymidine + phosphate = 2-deoxy-alpha-D-ribose 1-phosphate + thymine. The protein operates within pyrimidine metabolism; dTMP biosynthesis via salvage pathway; dTMP from thymine: step 1/2. Functionally, the enzymes which catalyze the reversible phosphorolysis of pyrimidine nucleosides are involved in the degradation of these compounds and in their utilization as carbon and energy sources, or in the rescue of pyrimidine bases for nucleotide synthesis. The protein is Thymidine phosphorylase of Escherichia coli (strain K12 / DH10B).